The primary structure comprises 309 residues: Elongator complex protein 5 (309 aa).

Residues Ser-3 and Ser-4 each carry the phosphoserine modification.

It belongs to the ELP5 family. As to quaternary structure, component of the elongator complex, which consists of ELP1/IKI3, ELP2, ELP3, ELP4, ELP5/IKI1 and ELP6. The elongator complex is composed of two copies of the Elp123 subcomplex (composed of ELP1/IKI3, ELP2 and ELP3) and two copies of the Elp456 subcomplex (composed of ELP4, ELP5/IKI1 and ELP6). The Elp123 subcomplex forms a two-lobed scaffold, which binds the Elp456 subcomplex asymmetrically. In each lobe, ELP2 is tightly sandwiched between ELP1/IKI3 and ELP3. The Elp123 subcomplex binds tRNA through ELP1/IKI3 and ELP3 and can bind 2 tRNAs simultaneously. tRNA-binding by the Elp123 subcomplex induces conformational rearrangements which precisely position the targeted anticodon base in the active site. The Elp456 subcomplex binds tRNA and has ATPase activity. Interacts with KTI11/DPH3.

The protein localises to the cytoplasm. The protein resides in the nucleus. It functions in the pathway tRNA modification; 5-methoxycarbonylmethyl-2-thiouridine-tRNA biosynthesis. Its function is as follows. Component of the elongator complex which is required for multiple tRNA modifications, including mcm5U (5-methoxycarbonylmethyl uridine), mcm5s2U (5-methoxycarbonylmethyl-2-thiouridine), and ncm5U (5-carbamoylmethyl uridine). The elongator complex catalyzes formation of carboxymethyluridine in the wobble base at position 34 in tRNAs. It functions as a gamma-toxin target (TOT); disruption of the complex confers resistance to Kluyveromyces lactis toxin zymocin (pGKL1 killer toxin). May also be involved in sensitivity to Pichia inositovora toxin. The chain is Elongator complex protein 5 (IKI1) from Saccharomyces cerevisiae (strain ATCC 204508 / S288c) (Baker's yeast).